A 217-amino-acid polypeptide reads, in one-letter code: Protein-L-isoaspartate O-methyltransferase (217 aa).

Residue serine 64 is part of the active site.

This sequence belongs to the methyltransferase superfamily. L-isoaspartyl/D-aspartyl protein methyltransferase family.

It localises to the cytoplasm. It carries out the reaction [protein]-L-isoaspartate + S-adenosyl-L-methionine = [protein]-L-isoaspartate alpha-methyl ester + S-adenosyl-L-homocysteine. Catalyzes the methyl esterification of L-isoaspartyl residues in peptides and proteins that result from spontaneous decomposition of normal L-aspartyl and L-asparaginyl residues. It plays a role in the repair and/or degradation of damaged proteins. This Azorhizobium caulinodans (strain ATCC 43989 / DSM 5975 / JCM 20966 / LMG 6465 / NBRC 14845 / NCIMB 13405 / ORS 571) protein is Protein-L-isoaspartate O-methyltransferase.